We begin with the raw amino-acid sequence, 234 residues long: Purine nucleoside phosphorylase DeoD-type (234 aa).

Histidine 5 is an a purine D-ribonucleoside binding site. Residues glycine 21, arginine 25, arginine 44, and 88 to 91 (RIGT) each bind phosphate. A purine D-ribonucleoside-binding positions include 180–182 (DME) and 204–205 (SD). Residue aspartate 205 is the Proton donor of the active site.

The protein belongs to the PNP/UDP phosphorylase family. As to quaternary structure, homohexamer; trimer of homodimers.

The enzyme catalyses a purine D-ribonucleoside + phosphate = a purine nucleobase + alpha-D-ribose 1-phosphate. It carries out the reaction a purine 2'-deoxy-D-ribonucleoside + phosphate = a purine nucleobase + 2-deoxy-alpha-D-ribose 1-phosphate. Its function is as follows. Catalyzes the reversible phosphorolytic breakdown of the N-glycosidic bond in the beta-(deoxy)ribonucleoside molecules, with the formation of the corresponding free purine bases and pentose-1-phosphate. In Buchnera aphidicola subsp. Acyrthosiphon pisum (strain APS) (Acyrthosiphon pisum symbiotic bacterium), this protein is Purine nucleoside phosphorylase DeoD-type.